We begin with the raw amino-acid sequence, 171 residues long: N5-carboxyaminoimidazole ribonucleotide mutase (171 aa).

Residues serine 13, aspartate 16, and arginine 43 each coordinate substrate.

It belongs to the AIR carboxylase family. Class I subfamily.

The enzyme catalyses 5-carboxyamino-1-(5-phospho-D-ribosyl)imidazole + H(+) = 5-amino-1-(5-phospho-D-ribosyl)imidazole-4-carboxylate. The protein operates within purine metabolism; IMP biosynthesis via de novo pathway; 5-amino-1-(5-phospho-D-ribosyl)imidazole-4-carboxylate from 5-amino-1-(5-phospho-D-ribosyl)imidazole (N5-CAIR route): step 2/2. Catalyzes the conversion of N5-carboxyaminoimidazole ribonucleotide (N5-CAIR) to 4-carboxy-5-aminoimidazole ribonucleotide (CAIR). The polypeptide is N5-carboxyaminoimidazole ribonucleotide mutase (Mycobacterium leprae (strain TN)).